A 398-amino-acid polypeptide reads, in one-letter code: Digeranylgeranylglycerophospholipid reductase (398 aa).

Positions 15, 34, 45, 46, 48, 99, 123, 280, 292, and 293 each coordinate FAD. Val-372 contacts a 2,3-bis-O-(geranylgeranyl)-sn-glycerol 1-phospholipid.

Belongs to the geranylgeranyl reductase family. DGGGPL reductase subfamily. It depends on FAD as a cofactor.

The enzyme catalyses a 2,3-bis-O-phytanyl-sn-glycerol 1-phospholipid + 8 oxidized 2[4Fe-4S]-[ferredoxin] = a 2,3-bis-O-(geranylgeranyl)-sn-glycerol 1-phospholipid + 8 reduced 2[4Fe-4S]-[ferredoxin] + 16 H(+). It catalyses the reaction 2,3-bis-O-(phytanyl)-sn-glycerol 1-phosphate + 8 oxidized 2[4Fe-4S]-[ferredoxin] = 2,3-bis-O-(geranylgeranyl)-sn-glycerol 1-phosphate + 8 reduced 2[4Fe-4S]-[ferredoxin] + 16 H(+). It carries out the reaction a 2,3-bis-O-phytanyl-sn-glycerol 1-phospholipid + 8 A = a 2,3-bis-O-(geranylgeranyl)-sn-glycerol 1-phospholipid + 8 AH2. The catalysed reaction is CDP-2,3-bis-O-(geranylgeranyl)-sn-glycerol + 8 AH2 = CDP-2,3-bis-O-(phytanyl)-sn-glycerol + 8 A. The enzyme catalyses archaetidylserine + 8 AH2 = 2,3-bis-O-phytanyl-sn-glycero-3-phospho-L-serine + 8 A. It participates in membrane lipid metabolism; glycerophospholipid metabolism. Functionally, is involved in the reduction of 2,3-digeranylgeranylglycerophospholipids (unsaturated archaeols) into 2,3-diphytanylglycerophospholipids (saturated archaeols) in the biosynthesis of archaeal membrane lipids. Catalyzes the formation of archaetidic acid (2,3-di-O-phytanyl-sn-glyceryl phosphate) from 2,3-di-O-geranylgeranylglyceryl phosphate (DGGGP) via the hydrogenation of each double bond of the isoprenoid chains. Is also probably able to reduce double bonds of geranyl groups in CDP-2,3-bis-O-(geranylgeranyl)-sn-glycerol and archaetidylserine, thus acting at various stages in the biosynthesis of archaeal membrane lipids. This is Digeranylgeranylglycerophospholipid reductase from Methanoculleus marisnigri (strain ATCC 35101 / DSM 1498 / JR1).